Consider the following 720-residue polypeptide: Casein kinase II subunit alpha'-interacting protein (720 aa).

Residues 227–249 (LSSPSFTNRLQRNSFPPTSSSLE) show a composition bias toward polar residues. 5 disordered regions span residues 227–250 (LSSPSFTNRLQRNSFPPTSSSLEF), 264–303 (KPLKIPVSNSNNNVFSLPLSPAKSRKSTPSPHSFLPSRRL), 333–366 (QNTASLSDKQRPRQLPSIHPKPNPSGQRVSSPKP), 602–640 (TQVQGPSSSSSSSCSSVSSSSSASSIGRPSPPTPWVDPT), and 678–698 (LRQSPPVKAKPVRSHNSKCLK). Over residues 608–626 (SSSSSSSCSSVSSSSSASS) the composition is skewed to low complexity. The segment covering 630-640 (PSPPTPWVDPT) has biased composition (pro residues). Over residues 687 to 698 (KPVRSHNSKCLK) the composition is skewed to basic residues.

Interacts (via C-terminus) with CSNK2A2. Post-translationally, phosphorylated by CK2 (casein kinase II), specifically by complexes containing catalytic subunit CSNK2A2. Expressed exclusively in testis (at protein level). Within testis, expressed mainly in the intermediate compartment of the seminiferous tubules with weaker expression in the basal and adluminal compartments.

It localises to the nucleus. Functionally, may play a role in chromatin regulation of male germ cells. The polypeptide is Casein kinase II subunit alpha'-interacting protein (Mus musculus (Mouse)).